We begin with the raw amino-acid sequence, 152 residues long: Regulatory protein RecX (152 aa).

It belongs to the RecX family.

The protein localises to the cytoplasm. Modulates RecA activity. The sequence is that of Regulatory protein RecX from Chromohalobacter salexigens (strain ATCC BAA-138 / DSM 3043 / CIP 106854 / NCIMB 13768 / 1H11).